A 497-amino-acid polypeptide reads, in one-letter code: Cytochrome P450 CYP94D108 (497 aa).

A helical transmembrane segment spans residues 6–26 (LLSLALLLLAAAAAAAFVLFP). Cys-439 lines the heme pocket.

The protein belongs to the cytochrome P450 family. As to expression, mainly expressed in roots and, at low levels, in leaves, fruits and stems.

Its subcellular location is the membrane. It functions in the pathway steroid metabolism; cholesterol metabolism. Involved in the biosynthesis of spiroketal steroid and saponin natural products from cholesterol such as diosgenin and analogs (e.g. furostanol and spirostanol), plant defense compounds used as main precursors for the industrial production of steroid hormones. During the 5,6-spiroketalization of cholesterol, may catalyze the 27-monohydroxylation of furostanol-type steroid to an intermediate product that undergoes a stereospecific formation of the terminal heterocycle to yield diosgenin. This Paris polyphylla (Daiswa polyphylla) protein is Cytochrome P450 CYP94D108.